We begin with the raw amino-acid sequence, 450 residues long: Tubulin alpha chain (450 aa).

Position 11 (Gln11) interacts with GTP. Position 40 is an N6-acetyllysine (Lys40). Residues Glu71, Ser140, Gly144, Thr145, Thr179, Asn206, and Asn228 each contribute to the GTP site. Glu71 lines the Mg(2+) pocket. The active site involves Glu254.

It belongs to the tubulin family. As to quaternary structure, dimer of alpha and beta chains. A typical microtubule is a hollow water-filled tube with an outer diameter of 25 nm and an inner diameter of 15 nM. Alpha-beta heterodimers associate head-to-tail to form protofilaments running lengthwise along the microtubule wall with the beta-tubulin subunit facing the microtubule plus end conferring a structural polarity. Microtubules usually have 13 protofilaments but different protofilament numbers can be found in some organisms and specialized cells. The cofactor is Mg(2+). In terms of processing, acetylation of alpha chains at Lys-40 stabilizes microtubules and affects affinity and processivity of microtubule motors. This modification has a role in multiple cellular functions, ranging from cell motility, cell cycle progression or cell differentiation to intracellular trafficking and signaling.

The protein resides in the cytoplasm. It localises to the cytoskeleton. It catalyses the reaction GTP + H2O = GDP + phosphate + H(+). In terms of biological role, tubulin is the major constituent of microtubules, a cylinder consisting of laterally associated linear protofilaments composed of alpha- and beta-tubulin heterodimers. Microtubules grow by the addition of GTP-tubulin dimers to the microtubule end, where a stabilizing cap forms. Below the cap, tubulin dimers are in GDP-bound state, owing to GTPase activity of alpha-tubulin. The chain is Tubulin alpha chain from Euplotoides octocarinatus (Freshwater ciliate).